The sequence spans 128 residues: uncharacterized protein (128 aa).

A VOC domain is found at Ser-5 to Gln-128. Residues His-8, Glu-56, His-77, and Glu-124 each coordinate a divalent metal cation.

This is an uncharacterized protein from Bacillus subtilis (strain 168).